The primary structure comprises 388 residues: Na(+)/H(+) antiporter NhaA (388 aa).

11 helical membrane-spanning segments follow: residues 8–28, 57–77, 93–113, 123–143, 152–172, 175–195, 210–230, 254–274, 278–298, 328–348, and 361–381; these read FFSA…LGLL, LAEF…IAEI, ILPL…YGLI, GWAI…LALG, VWLM…IALF, SHLN…MIGL, GVVL…AGVI, IIAP…SMGM, AMSF…GLFL, LFGL…IAEL, and YGIL…LRFL.

The protein belongs to the NhaA Na(+)/H(+) (TC 2.A.33) antiporter family.

The protein resides in the cell inner membrane. The catalysed reaction is Na(+)(in) + 2 H(+)(out) = Na(+)(out) + 2 H(+)(in). Its function is as follows. Na(+)/H(+) antiporter that extrudes sodium in exchange for external protons. The sequence is that of Na(+)/H(+) antiporter NhaA from Zymomonas mobilis subsp. mobilis (strain ATCC 31821 / ZM4 / CP4).